The primary structure comprises 201 residues: Probable calcium-binding protein CML15 (201 aa).

Positions 1-55 are disordered; it reads MGKVRAFFSRKGRGNSSGRSRSMREAAMNVDWSPRPSDLAAAAAAKPRPPAAEDE. 4 EF-hand domains span residues 51 to 86, 87 to 122, 125 to 160, and 161 to 196; these read AAEDETERVFRKFDANGDGRISRAELAALFRSVGHA, VTDDEVARMMQEADSDGDGYISLGEFAAISAPPPGD, AAEEDLRHAFGVFDADGNGVITPAELARVLRGIGEA, and ATVAQCRRMIDGVDRNGDGLINFEEFKLMMAAGAGF. The Ca(2+) site is built by Asp-64, Asn-66, Asp-68, Arg-70, Glu-75, Asp-100, Asp-102, Asp-104, Tyr-106, Glu-111, Asp-138, Asp-140, Asn-142, Glu-149, Asp-174, Asn-176, Asp-178, and Glu-185.

Its function is as follows. Potential calcium sensor. The chain is Probable calcium-binding protein CML15 (CML15) from Oryza sativa subsp. japonica (Rice).